The primary structure comprises 232 residues: MDVLINKLASCNFSRTRNQVGKPCIINCVPGAGKSTLIRELLNSDSRFRAYTFGEADPKNLSGRRILPASELQNAPQGALIIIDEYTEGSWEPGKICAAFGDPIQSRGPGIVADFVCNKTKRFGSSTCELLNGFGFEIHSEKEDICLVRDFFEVEPEGTVIAFESEVKDILARHFVEFEDICSIRGKTFEEVTFFTASNSIPEHLRADFFQCLTRHKNKLTIACPDATFAPS.

The region spanning 1–117 is the (+)RNA virus helicase ATP-binding domain; it reads MDVLINKLAS…GPGIVADFVC (117 aa). The 115-residue stretch at 118–232 folds into the (+)RNA virus helicase C-terminal domain; the sequence is NKTKRFGSST…ACPDATFAPS (115 aa).

It belongs to the Tymovirales TGBp1 protein family. In terms of assembly, homodimer and homooligomer. Interacts with capsid protein. Interacts with host AGO1; this interaction targets the host protein for degradation, thereby suppressing the antiviral RNA silencing.

It is found in the host cytoplasm. Functionally, transports viral genome to neighboring plant cells directly through plasmosdesmata, without any budding. The movement protein allows efficient cell to cell propagation, by bypassing the host cell wall barrier. Increases plasmodesma size exclusion limit. Acts as a suppressor of RNA-mediated gene silencing, also known as post-transcriptional gene silencing (PTGS), a mechanism of plant viral defense that limits the accumulation of viral RNAs. This is Movement and silencing protein TGBp1 from Populus balsamifera (Balsam poplar).